The chain runs to 25 residues: Antithrombin-III (25 aa).

The protein belongs to the serpin family. As to quaternary structure, forms protease inhibiting heterodimer with TMPRSS7. In terms of processing, phosphorylated by FAM20C in the extracellular medium. Plasma.

It localises to the secreted. It is found in the extracellular space. In terms of biological role, most important serine protease inhibitor in plasma that regulates the blood coagulation cascade. AT-III inhibits thrombin, matriptase-3/TMPRSS7, as well as factors IXa, Xa and XIa. Its inhibitory activity is greatly enhanced in the presence of heparin. The polypeptide is Antithrombin-III (SERPINC1) (Mesocricetus auratus (Golden hamster)).